Here is a 161-residue protein sequence, read N- to C-terminus: Phosphotransferase enzyme IIB component GlvB (161 aa).

Residues 10–32 (LTQIAIGLCFTLLYFVVFRTLIL) form a helical membrane-spanning segment. The 83-residue stretch at 70 to 152 (LDQAAGILQA…DSLINSHQSA (83 aa)) folds into the PTS EIIB type-1 domain. Cys92 functions as the Phosphocysteine intermediate in the catalytic mechanism.

The protein localises to the cell inner membrane. Its function is as follows. The phosphoenolpyruvate-dependent sugar phosphotransferase system (sugar PTS), a major carbohydrate active -transport system, catalyzes the phosphorylation of incoming sugar substrates concomitantly with their translocation across the cell membrane. This operon may be cryptic in wild-type K12 strains. The sequence is that of Phosphotransferase enzyme IIB component GlvB from Escherichia coli (strain K12).